The sequence spans 309 residues: Porphobilinogen deaminase (309 aa).

Residue Cys-242 is modified to S-(dipyrrolylmethanemethyl)cysteine.

The protein belongs to the HMBS family. As to quaternary structure, monomer. Dipyrromethane serves as cofactor.

It catalyses the reaction 4 porphobilinogen + H2O = hydroxymethylbilane + 4 NH4(+). It participates in porphyrin-containing compound metabolism; protoporphyrin-IX biosynthesis; coproporphyrinogen-III from 5-aminolevulinate: step 2/4. Its function is as follows. Tetrapolymerization of the monopyrrole PBG into the hydroxymethylbilane pre-uroporphyrinogen in several discrete steps. The protein is Porphobilinogen deaminase of Legionella pneumophila subsp. pneumophila (strain Philadelphia 1 / ATCC 33152 / DSM 7513).